The sequence spans 337 residues: Transcription initiation factor IIB (337 aa).

Residues 37-68 (EKAVCPECGSRNLVHDYERAELVCGDCGLVID) form a TFIIB-type zinc finger. Residues Cys-41, Cys-44, Cys-60, and Cys-63 each contribute to the Zn(2+) site. A run of 2 repeats spans residues 154-237 (SELD…SREL) and 248-329 (DYVP…ELAE).

This sequence belongs to the TFIIB family.

Stabilizes TBP binding to an archaeal box-A promoter. Also responsible for recruiting RNA polymerase II to the pre-initiation complex (DNA-TBP-TFIIB). This is Transcription initiation factor IIB from Methanosarcina mazei (Methanosarcina frisia).